The following is a 366-amino-acid chain: Histidinol-phosphate aminotransferase (366 aa).

Position 231 is an N6-(pyridoxal phosphate)lysine (lysine 231).

It belongs to the class-II pyridoxal-phosphate-dependent aminotransferase family. Histidinol-phosphate aminotransferase subfamily. The cofactor is pyridoxal 5'-phosphate.

The catalysed reaction is L-histidinol phosphate + 2-oxoglutarate = 3-(imidazol-4-yl)-2-oxopropyl phosphate + L-glutamate. The protein operates within amino-acid biosynthesis; L-histidine biosynthesis; L-histidine from 5-phospho-alpha-D-ribose 1-diphosphate: step 7/9. The sequence is that of Histidinol-phosphate aminotransferase from Halobacterium salinarum (strain ATCC 29341 / DSM 671 / R1).